We begin with the raw amino-acid sequence, 449 residues long: Biotin carboxylase (449 aa).

In terms of domain architecture, Biotin carboxylation spans 1–445 (MLDKIVIANR…NIHYLEKKLG (445 aa)). Residues K116, K159, 165–166 (GG), 201–204 (EKYL), H209, and H236 each bind ATP. In terms of domain architecture, ATP-grasp spans 120–317 (IAAMKKAGVP…LIKEQLRIAA (198 aa)). A hydrogencarbonate-binding site is contributed by K238. Residues E276 and E288 each contribute to the ATP site. E276, E288, and N290 together coordinate Mg(2+). Mn(2+)-binding residues include E276, E288, and N290. 3 residues coordinate hydrogencarbonate: R292, V295, and R338. R292 is an active-site residue. R338 serves as a coordination point for biotin.

As to quaternary structure, acetyl-CoA carboxylase is a heterohexamer of biotin carboxyl carrier protein, biotin carboxylase and the two subunits of carboxyl transferase in a 2:2 complex. It depends on Mg(2+) as a cofactor. Requires Mn(2+) as cofactor.

The catalysed reaction is N(6)-biotinyl-L-lysyl-[protein] + hydrogencarbonate + ATP = N(6)-carboxybiotinyl-L-lysyl-[protein] + ADP + phosphate + H(+). The protein operates within lipid metabolism; malonyl-CoA biosynthesis; malonyl-CoA from acetyl-CoA: step 1/1. This protein is a component of the acetyl coenzyme A carboxylase complex; first, biotin carboxylase catalyzes the carboxylation of the carrier protein and then the transcarboxylase transfers the carboxyl group to form malonyl-CoA. The sequence is that of Biotin carboxylase (accC) from Escherichia coli (strain K12).